The following is a 320-amino-acid chain: Aspartate carbamoyltransferase catalytic subunit (320 aa).

2 residues coordinate carbamoyl phosphate: Arg58 and Thr59. Residue Lys86 participates in L-aspartate binding. Carbamoyl phosphate-binding residues include Arg108, His136, and Gln139. L-aspartate-binding residues include Arg169 and Arg223. Carbamoyl phosphate-binding residues include Gly264 and Pro265.

It belongs to the aspartate/ornithine carbamoyltransferase superfamily. ATCase family. Heterododecamer (2C3:3R2) of six catalytic PyrB chains organized as two trimers (C3), and six regulatory PyrI chains organized as three dimers (R2).

It catalyses the reaction carbamoyl phosphate + L-aspartate = N-carbamoyl-L-aspartate + phosphate + H(+). The protein operates within pyrimidine metabolism; UMP biosynthesis via de novo pathway; (S)-dihydroorotate from bicarbonate: step 2/3. Functionally, catalyzes the condensation of carbamoyl phosphate and aspartate to form carbamoyl aspartate and inorganic phosphate, the committed step in the de novo pyrimidine nucleotide biosynthesis pathway. The polypeptide is Aspartate carbamoyltransferase catalytic subunit (Cereibacter sphaeroides (strain ATCC 17025 / ATH 2.4.3) (Rhodobacter sphaeroides)).